A 597-amino-acid chain; its full sequence is MHPPKTPSGALHRKRKMAAWPFSRLWKVSDPILFQMTLIAALLPAVLGNCGPPPTLSFAAPMDITLTETRFKTGTTLKYTCLPGYVRSHSTQTLTCNSDGEWVYNTFCIYKRCRHPGELRNGQVEIKTDLSFGSQIEFSCSEGFFLIGSTTSRCEVQDRGVGWSHPLPQCEIVKCKPPPDIRNGRHSGEENFYAYGFSVTYSCDPRFSLLGHASISCTVENETIGVWRPSPPTCEKITCRKPDVSHGEMVSGFGPIYNYKDTIVFKCQKGFVLRGSSVIHCDADSKWNPSPPACEPNSCINLPDIPHASWETYPRPTKEDVYVVGTVLRYRCHPGYKPTTDEPTTVICQKNLRWTPYQGCEALCCPEPKLNNGEITQHRKSRPANHCVYFYGDEISFSCHETSRFSAICQGDGTWSPRTPSCGDICNFPPKIAHGHYKQSSSYSFFKEEIIYECDKGYILVGQAKLSCSYSHWSAPAPQCKALCRKPELVNGRLSVDKDQYVEPENVTIQCDSGYGVVGPQSITCSGNRTWYPEVPKCEWETPEGCEQVLTGKRLMQCLPNPEDVKMALEVYKLSLEIEQLELQRDSARQSTLDKEL.

Residues 1-48 form the signal peptide; that stretch reads MHPPKTPSGALHRKRKMAAWPFSRLWKVSDPILFQMTLIAALLPAVLG. 8 Sushi domains span residues 49-110, 111-172, 173-236, 237-296, 297-362, 363-424, 425-482, and 483-540; these read NCGP…FCIY, KRCR…QCEI, VKCK…TCEK, ITCR…ACEP, NSCI…GCEA, LCCP…SCGD, ICNF…QCKA, and LCRK…KCEW. Disulfide bonds link C50–C96, C81–C108, C113–C154, C140–C170, C175–C217, C203–C234, C239–C281, C267–C294, C299–C348, C332–C360, C365–C409, C399–C422, C426–C468, C454–C480, C484–C525, and C511–C538. N221 is a glycosylation site (N-linked (GlcNAc...) asparagine). N-linked (GlcNAc...) asparagine glycans are attached at residues N506 and N528.

As to quaternary structure, disulfide-linked complex of alpha and beta chains of 3 possible sorts: a 570 kDa complex of 7 alpha chains and 1 beta chain, a 530 kDa homoheptamer of alpha chains or a 500 kDa complex of 6 alpha chains and 1 beta chain. The central body of the alpha chain homomer supports tentacles, each with the binding site for C4b at the end. In terms of assembly, (Microbial infection) Interacts with Staphylococcus aureus protein SdrE; this interaction inhibits complement-mediated bacterial opsonization. In terms of tissue distribution, chylomicrons in the plasma.

Its subcellular location is the secreted. Functionally, controls the classical pathway of complement activation. It binds as a cofactor to C3b/C4b inactivator (C3bINA), which then hydrolyzes the complement fragment C4b. It also accelerates the degradation of the C4bC2a complex (C3 convertase) by dissociating the complement fragment C2a. Alpha chain binds C4b. It also interacts with anticoagulant protein S and with serum amyloid P component. The sequence is that of C4b-binding protein alpha chain (C4BPA) from Homo sapiens (Human).